Here is a 347-residue protein sequence, read N- to C-terminus: Eukaryotic translation initiation factor 3 subunit I (347 aa).

WD repeat units follow at residues 8 to 49 (GHER…GTLD), 51 to 89 (HMGS…CVQT), 149 to 190 (THEG…KLVE), 194 to 233 (VHKD…VLKT), and 291 to 330 (GHFG…FDFK).

The protein belongs to the eIF-3 subunit I family. As to quaternary structure, component of the eukaryotic translation initiation factor 3 (eIF-3) complex.

It localises to the cytoplasm. In terms of biological role, component of the eukaryotic translation initiation factor 3 (eIF-3) complex, which is involved in protein synthesis of a specialized repertoire of mRNAs and, together with other initiation factors, stimulates binding of mRNA and methionyl-tRNAi to the 40S ribosome. The eIF-3 complex specifically targets and initiates translation of a subset of mRNAs involved in cell proliferation. The polypeptide is Eukaryotic translation initiation factor 3 subunit I (Candida glabrata (strain ATCC 2001 / BCRC 20586 / JCM 3761 / NBRC 0622 / NRRL Y-65 / CBS 138) (Yeast)).